The primary structure comprises 160 residues: Small ribosomal subunit protein bS6 (160 aa).

It belongs to the bacterial ribosomal protein bS6 family.

In terms of biological role, binds together with bS18 to 16S ribosomal RNA. This chain is Small ribosomal subunit protein bS6, found in Ureaplasma urealyticum serovar 10 (strain ATCC 33699 / Western).